Reading from the N-terminus, the 809-residue chain is BTB/POZ domain-containing protein At2g30600 (809 aa).

BTB domains follow at residues 211–273 and 351–420; these read SDTV…QILE and SDIK…NMED. In terms of domain architecture, BACK spans 466–537; that stretch reads VVSSISSCKL…LMWCMKAEES (72 aa).

Its pathway is protein modification; protein ubiquitination. Its function is as follows. May act as a substrate-specific adapter of an E3 ubiquitin-protein ligase complex (CUL3-RBX1-BTB) which mediates the ubiquitination and subsequent proteasomal degradation of target proteins. This Arabidopsis thaliana (Mouse-ear cress) protein is BTB/POZ domain-containing protein At2g30600.